Here is a 214-residue protein sequence, read N- to C-terminus: Alpha-S1-casein (214 aa).

Residues 1-15 (MKLLILTCLVAVALA) form the signal peptide. Phosphoserine occurs at positions 63, 79, 81, 82, 83, and 90. Repeats lie at residues 85–99 (EIVP…IQKE) and 125–140 (EIVP…SMKE).

It belongs to the alpha-casein family. In terms of tissue distribution, mammary gland specific. Secreted in milk.

It is found in the secreted. Its function is as follows. Important role in the capacity of milk to transport calcium phosphate. The polypeptide is Alpha-S1-casein (CSN1S1) (Bubalus bubalis (Domestic water buffalo)).